Reading from the N-terminus, the 647-residue chain is UvrABC system protein C (647 aa).

Residues 26–106 (SEPGCYLMRD…IKEHQPYFNI (81 aa)) form the GIY-YIG domain. The region spanning 216–251 (DQLKDLLHKQMLIQSKLQEFEKAAIIRDQIKGIEQL) is the UVR domain.

Belongs to the UvrC family. In terms of assembly, interacts with UvrB in an incision complex.

It localises to the cytoplasm. Functionally, the UvrABC repair system catalyzes the recognition and processing of DNA lesions. UvrC both incises the 5' and 3' sides of the lesion. The N-terminal half is responsible for the 3' incision and the C-terminal half is responsible for the 5' incision. The protein is UvrABC system protein C of Prochlorococcus marinus (strain MIT 9211).